The chain runs to 383 residues: Cell division protein FtsZ (383 aa).

Residues 20-24 (GGGGN), 107-109 (GTG), glutamate 138, arginine 142, and asparagine 186 contribute to the GTP site.

This sequence belongs to the FtsZ family. As to quaternary structure, homodimer. Polymerizes to form a dynamic ring structure in a strictly GTP-dependent manner. Interacts directly with several other division proteins.

Its subcellular location is the cytoplasm. Essential cell division protein that forms a contractile ring structure (Z ring) at the future cell division site. The regulation of the ring assembly controls the timing and the location of cell division. One of the functions of the FtsZ ring is to recruit other cell division proteins to the septum to produce a new cell wall between the dividing cells. Binds GTP and shows GTPase activity. This is Cell division protein FtsZ from Shigella flexneri.